Reading from the N-terminus, the 261-residue chain is Ribosomal RNA large subunit methyltransferase E (261 aa).

S-adenosyl-L-methionine is bound by residues glycine 81, tryptophan 83, aspartate 104, aspartate 120, and aspartate 144. Residue lysine 184 is the Proton acceptor of the active site. The interval 233 to 261 is disordered; sequence GNALGHEVEDDGPMPHDPREDATADEDQD. Residues 245–254 are compositionally biased toward basic and acidic residues; that stretch reads PMPHDPREDA.

The protein belongs to the class I-like SAM-binding methyltransferase superfamily. RNA methyltransferase RlmE family.

It is found in the cytoplasm. The enzyme catalyses uridine(2552) in 23S rRNA + S-adenosyl-L-methionine = 2'-O-methyluridine(2552) in 23S rRNA + S-adenosyl-L-homocysteine + H(+). Specifically methylates the uridine in position 2552 of 23S rRNA at the 2'-O position of the ribose in the fully assembled 50S ribosomal subunit. This chain is Ribosomal RNA large subunit methyltransferase E, found in Allorhizobium ampelinum (strain ATCC BAA-846 / DSM 112012 / S4) (Agrobacterium vitis (strain S4)).